The primary structure comprises 549 residues: Cation/acetate symporter ActP (549 aa).

13 helical membrane passes run 33-53, 77-97, 103-123, 148-168, 183-203, 206-226, 262-282, 303-323, 355-375, 404-424, 428-448, 464-484, and 493-513; these read WQAI…TYWA, LAIA…ALVF, GLIY…LIAE, ILSA…QMVG, IAVV…GMLA, WVQI…AFMV, ISAL…PHIL, GFMG…IMLV, LFLG…VAGL, VSKI…VLFE, IAFM…PIIL, GGWL…TIWV, and IFPY…GIWF.

Belongs to the sodium:solute symporter (SSF) (TC 2.A.21) family.

The protein localises to the cell inner membrane. Functionally, transports acetate. This chain is Cation/acetate symporter ActP, found in Salmonella agona (strain SL483).